A 217-amino-acid polypeptide reads, in one-letter code: Vesicle transport through interaction with t-SNAREs homolog 1A (217 aa).

The Cytoplasmic portion of the chain corresponds to 1-192 (MSSDFEGYEQ…GMLRRIIQNR (192 aa)). Coiled-coil stretches lie at residues 31 to 92 (PDEK…KRSR) and 112 to 178 (ENQR…GKSS). Residues 193 to 213 (ILLVILGIIVVIAILTAIAFF) form a helical; Anchor for type IV membrane protein membrane-spanning segment. The Vesicular segment spans residues 214-217 (VKGH).

This sequence belongs to the VTI1 family. In terms of assembly, interacts with distinct SNARE complexes that contain either STX5 or STX6. Interacts with NAPA and, to a lesser extent, with NAPG. Identified in a complex containing STX6, STX12, VAMP4 and VTI1A. As to expression, widely expressed.

The protein resides in the golgi apparatus membrane. In terms of biological role, V-SNARE that mediates vesicle transport pathways through interactions with t-SNAREs on the target membrane. These interactions are proposed to mediate aspects of the specificity of vesicle trafficking and to promote fusion of the lipid bilayers. Involved in vesicular transport from the late endosomes to the trans-Golgi network. Along with VAMP7, involved in an non-conventional RAB1-dependent traffic route to the cell surface used by KCNIP1 and KCND2. May be concerned with increased secretion of cytokines associated with cellular senescence. This chain is Vesicle transport through interaction with t-SNAREs homolog 1A (Vti1a), found in Mus musculus (Mouse).